Reading from the N-terminus, the 102-residue chain is Small ribosomal subunit protein uS10 (102 aa).

It belongs to the universal ribosomal protein uS10 family. In terms of assembly, part of the 30S ribosomal subunit.

In terms of biological role, involved in the binding of tRNA to the ribosomes. This Nitrosospira multiformis (strain ATCC 25196 / NCIMB 11849 / C 71) protein is Small ribosomal subunit protein uS10.